Here is a 331-residue protein sequence, read N- to C-terminus: Glucokinase (331 aa).

16 to 21 (GDIGGT) is an ATP binding site.

It belongs to the bacterial glucokinase family.

The protein resides in the cytoplasm. The catalysed reaction is D-glucose + ATP = D-glucose 6-phosphate + ADP + H(+). This is Glucokinase from Pseudomonas aeruginosa (strain LESB58).